A 251-amino-acid chain; its full sequence is Lactose phosphotransferase system repressor (251 aa).

Positions Lys3–Ser58 constitute an HTH deoR-type domain. The segment at residues Ile20–Asp39 is a DNA-binding region (H-T-H motif).

Functionally, repressor of the lactose catabolism operon. Galactose-6-phosphate is the inducer. This chain is Lactose phosphotransferase system repressor (lacR), found in Streptococcus mutans serotype c (strain ATCC 700610 / UA159).